The following is a 493-amino-acid chain: Hexokinase (493 aa).

A Hexokinase domain is found at 27–481; the sequence is EELSWRINKF…SGKGAAITAA (455 aa). Residues 91-239 form a hexokinase small subdomain region; that stretch reads TGQEKGTYYA…AIPAKVCCVL (149 aa). An ATP-binding site is contributed by 102-107; it reads DFGGTN. A glucose-binding region spans residues 177–203; sequence SVGFTFSFPCTSPSINCSILIDWTKGF. A hexokinase large subdomain region spans residues 240–470; the sequence is NDAVGTLMSC…ENLIIIPADD (231 aa).

This sequence belongs to the hexokinase family.

It catalyses the reaction a D-hexose + ATP = a D-hexose 6-phosphate + ADP + H(+). The catalysed reaction is D-mannose + ATP = D-mannose 6-phosphate + ADP + H(+). The enzyme catalyses D-fructose + ATP = D-fructose 6-phosphate + ADP + H(+). It carries out the reaction D-glucose + ATP = D-glucose 6-phosphate + ADP + H(+). The protein operates within carbohydrate metabolism; hexose metabolism. Its pathway is carbohydrate degradation; glycolysis; D-glyceraldehyde 3-phosphate and glycerone phosphate from D-glucose: step 1/4. Functionally, catalyzes the phosphorylation of various hexoses to hexose 6-phosphate. This is Hexokinase (HK) from Plasmodium falciparum.